A 105-amino-acid polypeptide reads, in one-letter code: Nitrogenase-stabilizing/protective protein NifW 1 (105 aa).

Belongs to the NifW family. Homotrimer; associates with NifD.

Functionally, may protect the nitrogenase Fe-Mo protein from oxidative damage. The sequence is that of Nitrogenase-stabilizing/protective protein NifW 1 from Trichormus variabilis (strain ATCC 29413 / PCC 7937) (Anabaena variabilis).